The primary structure comprises 470 residues: MGIGRVTQVMGPVIDVRFEHNEVPKINNALVIDVPKEEGTIQLTLEVALQLGDDVVRTIAMDSTDGVQRGMDVKDTGKEISVPVGDETLGRVFNVLGETIDLKEEISDSVRRDPIHRQAPAFDELSTEVQILETGIKVVDLLAPYIKGGKIGLFGGAGVGKTVLIQELINNIAQEHGGISVFAGVGERTREGNDLYFEMSDSGVIKKTAMVFGQMNEPPGARMRVALSGLTMAEYFRDEQGQDVLLFIDNIFRFTQAGSEVSALLGRMPSAVGYQPTLATEMGQLQERITSTTKGSVTSIQAVFVPADDYTDPAPATAFAHLDATTNLERKLTEMGIYPAVDPLASTSRALEPSIVGQEHYEVARDVQSTLQKYRELQDIIAILGMDELSDEDKQTVERARRIQFFLSQNFHVAEQFTGQKGSYVPVKTTVANFKDILDGKYDHIPEDAFRLVGSMDDVIAKAKDMGVEV.

155–162 provides a ligand contact to ATP; that stretch reads GGAGVGKT.

This sequence belongs to the ATPase alpha/beta chains family. As to quaternary structure, F-type ATPases have 2 components, CF(1) - the catalytic core - and CF(0) - the membrane proton channel. CF(1) has five subunits: alpha(3), beta(3), gamma(1), delta(1), epsilon(1). CF(0) has three main subunits: a(1), b(2) and c(9-12). The alpha and beta chains form an alternating ring which encloses part of the gamma chain. CF(1) is attached to CF(0) by a central stalk formed by the gamma and epsilon chains, while a peripheral stalk is formed by the delta and b chains.

The protein resides in the cell membrane. It catalyses the reaction ATP + H2O + 4 H(+)(in) = ADP + phosphate + 5 H(+)(out). Functionally, produces ATP from ADP in the presence of a proton gradient across the membrane. The catalytic sites are hosted primarily by the beta subunits. The chain is ATP synthase subunit beta from Staphylococcus aureus (strain MW2).